Reading from the N-terminus, the 397-residue chain is F-box protein At4g11590 (397 aa).

The F-box domain maps to 24–70 (EKNFNDVPLDVAIEIFMRLPVKSVARFLLLSKFWAEIIRSRHFITSF).

Part of a SCF (ASK-cullin-F-box) protein ligase complex. Interacts with ASK16.

It is found in the nucleus. The protein operates within protein modification; protein ubiquitination. Its function is as follows. Component of SCF(ASK-cullin-F-box) E3 ubiquitin ligase complexes, which may mediate the ubiquitination and subsequent proteasomal degradation of target proteins. This Arabidopsis thaliana (Mouse-ear cress) protein is F-box protein At4g11590.